The following is an 850-amino-acid chain: Mitogen-activated protein kinase kinase kinase 11 (850 aa).

At Ser-11 the chain carries Phosphoserine. Gly residues predominate over residues 18–31; the sequence is GSGSGGGGGSGGVR. The disordered stretch occupies residues 18 to 37; it reads GSGSGGGGGSGGVRPEGSPK. Ser-35 bears the Phosphoserine mark. Positions 42–106 constitute an SH3 domain; sequence YANPVWTALF…PSNYVSRGGG (65 aa). The Protein kinase domain maps to 118-380; that stretch reads LRLEEVIGIG…ASILQQLEAL (263 aa). Residues 124-132 and Lys-145 contribute to the ATP site; that span reads IGIGGFGKV. Residue Asp-242 is the Proton acceptor of the active site. Position 278 is a phosphothreonine; by autocatalysis (Thr-278). Position 282 is a phosphoserine; by autocatalysis and MAP4K1 (Ser-282). The residue at position 395 (Ser-395) is a Phosphoserine. Leucine-zipper stretches follow at residues 404–425 and 439–460; these read IQGL…EEEL and LRRR…ELTL. Residues Ser-508, Ser-525, Ser-549, Ser-556, and Ser-557 each carry the phosphoserine modification. Residues 536–850 form a disordered region; sequence LEPAESGQTW…QAPWAPEAGP (315 aa). The segment covering 551 to 563 has biased composition (basic and acidic residues); it reads RRLDDSSNGERRA. Positions 598 to 610 are enriched in low complexity; that stretch reads SSPLGSPSTPPAL. Residue Ser-655 is modified to Phosphoserine. The span at 677–693 shows a compositional bias: pro residues; the sequence is TAPPPAQMASPCPPDLP. The residue at position 712 (Thr-712) is a Phosphothreonine. 9 positions are modified to phosphoserine: Ser-728, Ser-731, Ser-743, Ser-751, Ser-761, Ser-773, Ser-792, Ser-796, and Ser-818. Residues 790–802 are compositionally biased toward pro residues; the sequence is RPSPLPSPQPAPR. Over residues 803–819 the composition is skewed to low complexity; sequence RAPWTLFPDSDPFWDSP.

Belongs to the protein kinase superfamily. STE Ser/Thr protein kinase family. MAP kinase kinase kinase subfamily. In terms of assembly, homodimer; undergoes dimerization during activation. Interacts with MAP2K4/MKK4. Interacts with MAP2K7/MKK7. Found in a complex with SH3RF1, RAC1, MAP2K7/MKK7, MAPK8IP1/JIP1 and MAPK8/JNK1. It depends on Mg(2+) as a cofactor. Autophosphorylation on serine and threonine residues within the activation loop plays a role in enzyme activation. Thr-278 is likely to be the main autophosphorylation site. Phosphorylation of Ser-556 and Ser-557 is induced by CDC42.

The protein localises to the cytoplasm. The protein resides in the cytoskeleton. It is found in the microtubule organizing center. It localises to the centrosome. It catalyses the reaction L-seryl-[protein] + ATP = O-phospho-L-seryl-[protein] + ADP + H(+). The catalysed reaction is L-threonyl-[protein] + ATP = O-phospho-L-threonyl-[protein] + ADP + H(+). Its activity is regulated as follows. Homodimerization via the leucine zipper domains is required for autophosphorylation and subsequent activation. In terms of biological role, activates the JUN N-terminal pathway. Required for serum-stimulated cell proliferation and for mitogen and cytokine activation of MAPK14 (p38), MAPK3 (ERK) and MAPK8 (JNK1) through phosphorylation and activation of MAP2K4/MKK4 and MAP2K7/MKK7. Plays a role in mitogen-stimulated phosphorylation and activation of BRAF, but does not phosphorylate BRAF directly. Influences microtubule organization during the cell cycle. This Rattus norvegicus (Rat) protein is Mitogen-activated protein kinase kinase kinase 11 (Map3k11).